We begin with the raw amino-acid sequence, 126 residues long: Protein LLP homolog (126 aa).

A compositionally biased stretch (basic residues) spans 1–21 (MAKSLRSKWRRKMRAEKRKKV). Disordered stretches follow at residues 1 to 22 (MAKS…KKVA) and 53 to 126 (VPPE…RLAW). Residues 73–94 (DGGKMDLDTKRNKKTMLDEHGR) show a composition bias toward basic and acidic residues. The span at 103-126 (QAKKLKAKRVGKNGKPKPKKRLAW) shows a compositional bias: basic residues.

Belongs to the learning-associated protein family.

The protein localises to the nucleus. Its subcellular location is the nucleolus. It localises to the chromosome. Functionally, regulates dendritic and spine growth and synaptic transmission. This Danio rerio (Zebrafish) protein is Protein LLP homolog (llph).